A 417-amino-acid chain; its full sequence is Tyrosine--tRNA ligase (417 aa).

An L-tyrosine-binding site is contributed by Tyr-34. A 'HIGH' region motif is present at residues 39 to 48 (PTAKSIHIGN). Tyr-165 and Gln-169 together coordinate L-tyrosine. The 'KMSKS' region signature appears at 227–231 (KFGKS). Position 230 (Lys-230) interacts with ATP. An S4 RNA-binding domain is found at 349–416 (TDVVELLVKD…GKKKYFLAKV (68 aa)).

The protein belongs to the class-I aminoacyl-tRNA synthetase family. TyrS type 1 subfamily. Homodimer.

The protein resides in the cytoplasm. It carries out the reaction tRNA(Tyr) + L-tyrosine + ATP = L-tyrosyl-tRNA(Tyr) + AMP + diphosphate + H(+). In terms of biological role, catalyzes the attachment of tyrosine to tRNA(Tyr) in a two-step reaction: tyrosine is first activated by ATP to form Tyr-AMP and then transferred to the acceptor end of tRNA(Tyr). This is Tyrosine--tRNA ligase from Oenococcus oeni (strain ATCC BAA-331 / PSU-1).